A 199-amino-acid chain; its full sequence is MFRLLKRACSFLLLFVIYQSFVIHHNVQRVLAYKPMVEKTLAENDTKANVDLVLAMIYTETKGGEADVMQSSESSSGQKNSITDSQASIEHGVNLLSHNLALAEEAGVDSWTAVQAYNFGTAYIDYIAEHGGQNTVDLATTYSKTVVAPSLGNTSGQTYFYYHPLALISGGKLYKNGGNIYYSREVHFNLYLIELMSLF.

It is found in the cell surface. This chain is Pneumococcal vaccine antigen A homolog (pvaA), found in Streptococcus pyogenes serotype M1.